Here is a 61-residue protein sequence, read N- to C-terminus: Large ribosomal subunit protein uL30 (61 aa).

This sequence belongs to the universal ribosomal protein uL30 family. Part of the 50S ribosomal subunit.

The polypeptide is Large ribosomal subunit protein uL30 (Chromohalobacter salexigens (strain ATCC BAA-138 / DSM 3043 / CIP 106854 / NCIMB 13768 / 1H11)).